Consider the following 369-residue polypeptide: Transcription initiation factor IIA large subunit (369 aa).

Composition is skewed to polar residues over residues 113–210 and 218–233; these read HGNS…QNSP and TESSNTTPANSRNDVP. The segment at 113–248 is disordered; sequence HGNSNYYSPP…IHDLDDAGSP (136 aa). Position 249 is a phosphoserine (Ser249). Residues 282–319 are disordered; sequence IEDNEDEKKPPVDTPSDEAINSDLDDPDSDEAPETEEG. Acidic residues predominate over residues 304-319; that stretch reads DLDDPDSDEAPETEEG.

Belongs to the TFIIA subunit 1 family. As to quaternary structure, TFIIA is a heterodimer of the large subunit and the small subunit gamma.

It localises to the nucleus. TFIIA is a component of the transcription machinery of RNA polymerase II and plays an important role in transcriptional activation. TFIIA in a complex with tbp mediates transcriptional activity. This Schizosaccharomyces pombe (strain 972 / ATCC 24843) (Fission yeast) protein is Transcription initiation factor IIA large subunit.